Here is a 90-residue protein sequence, read N- to C-terminus: Large ribosomal subunit protein bL27 (90 aa).

Positions 1 to 21 (MAHKKAGGSSRNGRDSHGKRL) are disordered.

Belongs to the bacterial ribosomal protein bL27 family.

This chain is Large ribosomal subunit protein bL27, found in Nitrobacter winogradskyi (strain ATCC 25391 / DSM 10237 / CIP 104748 / NCIMB 11846 / Nb-255).